The sequence spans 269 residues: ATP synthase subunit gamma, mitochondrial (269 aa).

In terms of assembly, F-type ATP synthases have 2 components, the catalytic core F(1) and the membrane-embedded component F(0), linked together by a central stalk and a peripheral stalk. The central stalk, also called rotor shaft, is often seen as part of F(1). The peripheral stalk is seen as part of F(0). F(0) contains the membrane channel next to the rotor. F-type ATP synthases form dimers but each monomer functions independently in ATP generation. The dimer consists of 18 different polypeptides: ATP1 (subunit alpha, part of F(1), 3 molecules per monomer), ATP2 (subunit beta, part of F(1), 3 molecules per monomer), ATP3 (subunit gamma, part of the central stalk), ATP4 (subunit b, part of the peripheral stalk), ATP5/OSCP (subunit 5/OSCP, part of the peripheral stalk), ATP6 (subunit a, part of the peripheral stalk), ATP7 (subunit d, part of the peripheral stalk), ATP8 (subunit 8, part of the peripheral stalk), OLI1 (subunit c, part of the rotor, 10 molecules per monomer), ATP14 (subunit h, part of the peripheral stalk), ATP15 (subunit epsilon, part of the central stalk), ATP16 (subunit delta, part of the central stalk), ATP17 (subunit f, part of the peripheral stalk), ATP18 (subunit i/j, part of the peripheral stalk). Dimer-specific subunits are ATP19 (subunit k, at interface between monomers), ATP20 (subunit g, at interface between monomers), TIM11 (subunit e, at interface between monomers). Also contains subunit L.

It is found in the mitochondrion inner membrane. Its function is as follows. Mitochondrial membrane ATP synthase (F(1)F(0) ATP synthase or Complex V) produces ATP from ADP in the presence of a proton gradient across the membrane which is generated by electron transport complexes of the respiratory chain. F-type ATP synthases consist of two structural domains, F(1) - containing the extramembraneous catalytic core, and F(0) - containing the membrane proton channel, linked together by a central stalk and a peripheral stalk. During catalysis, ATP synthesis in the catalytic domain of F(1) is coupled via a rotary mechanism of the central stalk subunits to proton translocation. Part of the complex F(1) domain and the central stalk which is part of the complex rotary element. The gamma/ATP3 subunit protrudes into the catalytic domain formed of alpha/ATP1(3)beta/ATP2(3). Rotation of the central stalk against the surrounding alpha/ATP1(3)beta/ATP2(3) subunits leads to hydrolysis of ATP in three separate catalytic sites on the beta/ATP2 subunits. This chain is ATP synthase subunit gamma, mitochondrial, found in Pichia angusta (Yeast).